Consider the following 292-residue polypeptide: MNKPFNCIGIVGHPRHPTALATHEMLYHWLTEKGYSVLIEQQIARELNLKDAPTGSLADIGQQADLAVVVGGDGNMLGAARVLSRYDIKVIGVNRGNLGFLTDLDPDHAQQQLSDVLDGHYLSEQRFMLEAHVCRTNQPDSISTAINEVVLHPGKVAHMIEFEVYIDDRFAFSQRSDGLIIATPTGSTAYSLSAGGPILTPSLEAIALVPMFPHTLSARPLVINSSSTIRLKFSCITNDLEISCDSQIALPVQEGEEVLIRRSEHHLNLIHPKNYSYFNTLSSKLGWSKKLF.

Aspartate 73 acts as the Proton acceptor in catalysis. Residues 73–74 (DG), 147–148 (NE), histidine 158, arginine 175, aspartate 177, 188–193 (TAYSLS), and glutamine 247 each bind NAD(+).

The protein belongs to the NAD kinase family. It depends on a divalent metal cation as a cofactor.

The protein localises to the cytoplasm. The catalysed reaction is NAD(+) + ATP = ADP + NADP(+) + H(+). In terms of biological role, involved in the regulation of the intracellular balance of NAD and NADP, and is a key enzyme in the biosynthesis of NADP. Catalyzes specifically the phosphorylation on 2'-hydroxyl of the adenosine moiety of NAD to yield NADP. The sequence is that of NAD kinase from Pectobacterium atrosepticum (strain SCRI 1043 / ATCC BAA-672) (Erwinia carotovora subsp. atroseptica).